Consider the following 70-residue polypeptide: Exodeoxyribonuclease 7 small subunit (70 aa).

The protein belongs to the XseB family. Heterooligomer composed of large and small subunits.

It is found in the cytoplasm. It catalyses the reaction Exonucleolytic cleavage in either 5'- to 3'- or 3'- to 5'-direction to yield nucleoside 5'-phosphates.. In terms of biological role, bidirectionally degrades single-stranded DNA into large acid-insoluble oligonucleotides, which are then degraded further into small acid-soluble oligonucleotides. This chain is Exodeoxyribonuclease 7 small subunit, found in Streptococcus gordonii (strain Challis / ATCC 35105 / BCRC 15272 / CH1 / DL1 / V288).